The chain runs to 295 residues: Acetyl-coenzyme A carboxylase carboxyl transferase subunit beta (295 aa).

Residues M1 to K20 are disordered. The CoA carboxyltransferase N-terminal domain maps to L28–A295. Zn(2+) is bound by residues C32, C35, C51, and C54. The segment at C32–C54 adopts a C4-type zinc-finger fold.

The protein belongs to the AccD/PCCB family. Acetyl-CoA carboxylase is a heterohexamer composed of biotin carboxyl carrier protein (AccB), biotin carboxylase (AccC) and two subunits each of ACCase subunit alpha (AccA) and ACCase subunit beta (AccD). Zn(2+) serves as cofactor.

Its subcellular location is the cytoplasm. It carries out the reaction N(6)-carboxybiotinyl-L-lysyl-[protein] + acetyl-CoA = N(6)-biotinyl-L-lysyl-[protein] + malonyl-CoA. Its pathway is lipid metabolism; malonyl-CoA biosynthesis; malonyl-CoA from acetyl-CoA: step 1/1. Component of the acetyl coenzyme A carboxylase (ACC) complex. Biotin carboxylase (BC) catalyzes the carboxylation of biotin on its carrier protein (BCCP) and then the CO(2) group is transferred by the transcarboxylase to acetyl-CoA to form malonyl-CoA. This chain is Acetyl-coenzyme A carboxylase carboxyl transferase subunit beta, found in Xanthomonas axonopodis pv. citri (strain 306).